A 69-amino-acid chain; its full sequence is Conotoxin AbVIE (69 aa).

The signal sequence occupies residues valine 1–alanine 17. The propeptide occupies glutamate 18–threonine 40. Disulfide bonds link cysteine 43-cysteine 57, cysteine 50-cysteine 61, and cysteine 56-cysteine 66.

This sequence belongs to the conotoxin O1 superfamily. Expressed by the venom duct.

It is found in the secreted. The protein is Conotoxin AbVIE of Conus abbreviatus (Abbreviated cone).